Consider the following 91-residue polypeptide: Protein SPATA45 homolog (91 aa).

Positions 42 to 91 (RADRKHDPNGFNSSVFKGASNQHQESSLDFATAEPEFHRERRHFPEKSEY) are disordered. The span at 51–70 (GFNSSVFKGASNQHQESSLD) shows a compositional bias: polar residues. Residues 76 to 91 (PEFHRERRHFPEKSEY) show a composition bias toward basic and acidic residues.

This sequence belongs to the SPATA45 family.

This Nematostella vectensis (Starlet sea anemone) protein is Protein SPATA45 homolog.